The sequence spans 247 residues: Chymase (247 aa).

The signal sequence occupies residues 1-19 (MNLHALCLLLLLLGSSTKA). Positions 20-21 (GE) are cleaved as a propeptide — activation peptide. One can recognise a Peptidase S1 domain in the interval 22-245 (IIGGTECIPH…YRPWINKILR (224 aa)). The cysteines at positions 51 and 67 are disulfide-linked. Histidine 66 functions as the Charge relay system in the catalytic mechanism. Asparagine 80 carries an N-linked (GlcNAc...) asparagine glycan. Aspartate 110 (charge relay system) is an active-site residue. 2 cysteine pairs are disulfide-bonded: cysteine 144–cysteine 209 and cysteine 175–cysteine 188. Serine 203 (charge relay system) is an active-site residue.

It belongs to the peptidase S1 family. Granzyme subfamily. As to expression, mast cells.

It localises to the secreted. Its subcellular location is the cytoplasmic granule. The enzyme catalyses Preferential cleavage: Phe-|-Xaa &gt; Tyr-|-Xaa &gt; Trp-|-Xaa &gt; Leu-|-Xaa.. In terms of biological role, major secreted protease of mast cells with suspected roles in vasoactive peptide generation, extracellular matrix degradation, and regulation of gland secretion. This Rattus norvegicus (Rat) protein is Chymase (Cma1).